The primary structure comprises 430 residues: uncharacterized protein (430 aa).

The N-terminal stretch at 1–19 (MKILLFVVLFFNVLVGIYS) is a signal peptide. N-linked (GlcNAc...) asparagine glycosylation is present at Asn-39. Residues 119 to 408 (LDPNSSPSPS…ELLEKNSDGN (290 aa)) are disordered. The segment covering 124 to 168 (SPSPSPSPSPSPSPSPSPSPSPSPSPSPSPSPSPSPSPSPSPSPS) has biased composition (pro residues). Composition is skewed to low complexity over residues 169–253 (PSSS…TPSQ) and 263–285 (PTPT…TQTP). Residues 286 to 303 (ISSRPMSISTEKPSSSEE) are compositionally biased toward polar residues. N-linked (GlcNAc...) asparagine glycosylation is present at Asn-312. Residues 316–325 (SEDKKKDSES) show a composition bias toward basic and acidic residues. Residues 326 to 370 (KSSQSESPSPSASASESESASESASASTSVSVSASPLPIMDSSSS) show a composition bias toward low complexity. Residue Asn-408 is glycosylated (N-linked (GlcNAc...) asparagine).

The protein localises to the secreted. This is an uncharacterized protein from Dictyostelium discoideum (Social amoeba).